A 340-amino-acid polypeptide reads, in one-letter code: Glyceraldehyde-3-phosphate dehydrogenase (340 aa).

Residues 12-13, D40, K85, and S128 each bind NAD(+); that span reads RI. Residues 158–160, T189, R204, 217–218, and R240 each bind D-glyceraldehyde 3-phosphate; these read SCT and TG. C159 (nucleophile) is an active-site residue. K257 participates in a covalent cross-link: Isoglutamyl lysine isopeptide (Lys-Gln) (interchain with Q-Cter in protein Pup). N321 serves as a coordination point for NAD(+).

Belongs to the glyceraldehyde-3-phosphate dehydrogenase family. Homotetramer.

Its subcellular location is the cytoplasm. It catalyses the reaction D-glyceraldehyde 3-phosphate + phosphate + NAD(+) = (2R)-3-phospho-glyceroyl phosphate + NADH + H(+). The protein operates within carbohydrate degradation; glycolysis; pyruvate from D-glyceraldehyde 3-phosphate: step 1/5. Functionally, catalyzes the oxidative phosphorylation of glyceraldehyde 3-phosphate (G3P) to 1,3-bisphosphoglycerate (BPG) using the cofactor NAD. The first reaction step involves the formation of a hemiacetal intermediate between G3P and a cysteine residue, and this hemiacetal intermediate is then oxidized to a thioester, with concomitant reduction of NAD to NADH. The reduced NADH is then exchanged with the second NAD, and the thioester is attacked by a nucleophilic inorganic phosphate to produce BPG. This Mycolicibacterium smegmatis (strain ATCC 700084 / mc(2)155) (Mycobacterium smegmatis) protein is Glyceraldehyde-3-phosphate dehydrogenase (gapA).